Here is a 351-residue protein sequence, read N- to C-terminus: Circumsporozoite protein (351 aa).

Positions 1–22 are cleaved as a signal peptide; that stretch reads MKNFILLAVSSILLVDLLPTHF. Residues 50–266 are disordered; sequence AQVRQSASRG…GQNNQGANVP (217 aa). A compositionally biased stretch (basic and acidic residues) spans 61–96; it reads GLGEKPKEGADKEKKKEKEKEKEEEPKKPNENKLKQ. Residues 80–88 are required for the binding to heparan sulfate proteoglycans (HSPGs) on the surface of host hepatocytes; the sequence is KEKEEEPKK. Residues 93–97 are region I; contains the proteolytic cleavage site; that stretch reads KLKQP. The segment covering 97–219 has biased composition (low complexity); it reads PEQPAAGAGG…AGARGEQPAA (123 aa). Repeat copies occupy residues 101–109, 110–118, 119–127, 128–136, 137–145, 146–154, 155–163, 164–172, 173–181, 182–190, 191–199, 200–208, 209–217, and 218–226. Positions 101–226 are 14 X 9 AA tandem repeats of A-A-G-A-[GR]-G-E-Q-P; sequence AAGAGGEQPA…PAAGAGGEQP (126 aa). Gly residues predominate over residues 244–256; sequence GARGGNAGAGKGQ. Positions 277–329 constitute a TSP type-1 domain; it reads KIRSSVTTEWTPCSVTCGNGVRIRRKGHAGNKKAEDLTMDDLEVEACVMDKCA. Disulfide bonds link C289–C323 and C293–C328. O-linked (Fuc) threonine glycosylation occurs at T292. C328 carries the GPI-anchor amidated cysteine lipid modification. Residues 329–351 constitute a propeptide, removed in mature form; the sequence is AGIFNVVSNSLGLVILLVLALFN.

The protein belongs to the plasmodium circumsporozoite protein family. In terms of processing, during host cell invasion, proteolytically cleaved at the cell membrane in the region I by a papain-like cysteine protease of parasite origin. Cleavage is triggered by the sporozoite contact with highly sulfated heparan sulfate proteoglycans (HSPGs) present on the host hepatocyte cell surface. Cleavage exposes the TSP type-1 (TSR) domain and is required for productive invasion of host hepatocytes but not for adhesion to the host cell membrane. Cleavage is dispensable for sporozoite development in the oocyst, motility and for traversal of host and vector cells. Post-translationally, O-glycosylated; maybe by POFUT2.

It localises to the cell membrane. Its subcellular location is the cytoplasm. Its function is as follows. Essential sporozoite protein. In the mosquito vector, required for sporozoite development in the oocyst, migration through the vector hemolymph and entry into the vector salivary glands. In the vertebrate host, required for sporozoite migration through the host dermis and infection of host hepatocytes. Binds to highly sulfated heparan sulfate proteoglycans (HSPGs) on the surface of host hepatocytes. In terms of biological role, in the vertebrate host, binds to highly sulfated heparan sulfate proteoglycans (HSPGs) on the surface of host hepatocytes and is required for sporozoite invasion of the host hepatocytes. The sequence is that of Circumsporozoite protein from Plasmodium knowlesi (strain nuri).